The following is a 307-amino-acid chain: Putative ankyrin repeat protein L59 (307 aa).

9 ANK repeats span residues 41-67 (LFNKLLKVALKNRNLPMVKFVCDNLEK), 68-97 (IDNKAITLAAKYNCLEILKYLHEKGLDTTN), 98-127 (HNYSALSWAARNNDFKMVEYLQHQGSDIRA), 129-157 (DDEALRWAALSGCLEMVEYLQTQGCDVRN), 158-187 (RNDFAIKYAARNGHFKLVRYLHSQGSDIRT), 188-217 (DDDYALRWAARNGHLEIVKYLHSKGCNIHA), 219-247 (GDSAIKWASMGGYLEIVEYLHGVGCDIRI), 248-277 (DNDYPIRWAASNGHLEVVEYLFSQGCDIGA), and 279-307 (NNYALMWAKKNGHDDVVEYIVLLKLLKLY).

The sequence is that of Putative ankyrin repeat protein L59 from Acanthamoeba polyphaga (Amoeba).